We begin with the raw amino-acid sequence, 417 residues long: MQLYALGLNHHTAPLAIRERVAFQPDRLDQALQALTDSRTVSEAAILSTCNRTELYFAAEQPQRAADWLAGFHQLPLAQVSPYLYSYPQRDAVRHVFRVASGLDSMVLGEPQILGQVKEAARRAEEAGTLGTLLHKLFQNTFAVAKEVRSTTAIGANIVSMAAAAVHLTGRIFERVSDQHVLFIGAGEMIELCAAHFAGAGPRSMTVANRTEARAEALAARLGAQTMRLDAIADALPRFDVVVSCTASPLPIVGLGMVERAVKVRRHRPIVMVDLAVPRDVEPEVGQLDDVFLYTVDDLAQVVDAGIESRQQAVVEAEGIIDQRVDGFLHWLHARDAVPTIRALREHAETLRRGEIERALRQLAKGEDPQAVLDALSHGLTNKLMHGPTRFLTQAEGEGQAEASRVVQQLFNLSRHD.

Substrate contacts are provided by residues 49–52 (TCNR), Ser-105, 110–112 (EPQ), and Gln-116. Cys-50 acts as the Nucleophile in catalysis. Position 185–190 (185–190 (GAGEMI)) interacts with NADP(+).

This sequence belongs to the glutamyl-tRNA reductase family. As to quaternary structure, homodimer.

The catalysed reaction is (S)-4-amino-5-oxopentanoate + tRNA(Glu) + NADP(+) = L-glutamyl-tRNA(Glu) + NADPH + H(+). Its pathway is porphyrin-containing compound metabolism; protoporphyrin-IX biosynthesis; 5-aminolevulinate from L-glutamyl-tRNA(Glu): step 1/2. Catalyzes the NADPH-dependent reduction of glutamyl-tRNA(Glu) to glutamate 1-semialdehyde (GSA). In Azoarcus sp. (strain BH72), this protein is Glutamyl-tRNA reductase.